A 187-amino-acid chain; its full sequence is Elongation factor P (187 aa).

The protein belongs to the elongation factor P family.

The protein localises to the cytoplasm. The protein operates within protein biosynthesis; polypeptide chain elongation. Its function is as follows. Involved in peptide bond synthesis. Stimulates efficient translation and peptide-bond synthesis on native or reconstituted 70S ribosomes in vitro. Probably functions indirectly by altering the affinity of the ribosome for aminoacyl-tRNA, thus increasing their reactivity as acceptors for peptidyl transferase. The protein is Elongation factor P (efp) of Synechocystis sp. (strain ATCC 27184 / PCC 6803 / Kazusa).